The sequence spans 121 residues: Small ribosomal subunit protein uS13 (121 aa).

The segment at 95 to 121 (GLPVRGQKTKTNARTRKGKRKTVGAKS) is disordered.

It belongs to the universal ribosomal protein uS13 family. In terms of assembly, part of the 30S ribosomal subunit. Forms a loose heterodimer with protein S19. Forms two bridges to the 50S subunit in the 70S ribosome.

In terms of biological role, located at the top of the head of the 30S subunit, it contacts several helices of the 16S rRNA. In the 70S ribosome it contacts the 23S rRNA (bridge B1a) and protein L5 of the 50S subunit (bridge B1b), connecting the 2 subunits; these bridges are implicated in subunit movement. Contacts the tRNAs in the A and P-sites. The sequence is that of Small ribosomal subunit protein uS13 from Campylobacter jejuni subsp. jejuni serotype O:23/36 (strain 81-176).